We begin with the raw amino-acid sequence, 117 residues long: DNA-directed RNA polymerase subunit omega (117 aa).

It belongs to the RNA polymerase subunit omega family. In terms of assembly, the RNAP catalytic core consists of 2 alpha, 1 beta, 1 beta' and 1 omega subunit. When a sigma factor is associated with the core the holoenzyme is formed, which can initiate transcription.

It carries out the reaction RNA(n) + a ribonucleoside 5'-triphosphate = RNA(n+1) + diphosphate. In terms of biological role, promotes RNA polymerase assembly. Latches the N- and C-terminal regions of the beta' subunit thereby facilitating its interaction with the beta and alpha subunits. The chain is DNA-directed RNA polymerase subunit omega from Cereibacter sphaeroides (strain ATCC 17029 / ATH 2.4.9) (Rhodobacter sphaeroides).